Here is a 130-residue protein sequence, read N- to C-terminus: Small ribosomal subunit protein bS6 (130 aa).

Positions 100 to 130 (SPMVKAKDERRERREDFAEAGDDVDAGDSEE) are disordered. Basic and acidic residues predominate over residues 104-116 (KAKDERRERREDF). The span at 117–130 (AEAGDDVDAGDSEE) shows a compositional bias: acidic residues.

This sequence belongs to the bacterial ribosomal protein bS6 family.

Binds together with bS18 to 16S ribosomal RNA. The sequence is that of Small ribosomal subunit protein bS6 from Pectobacterium carotovorum subsp. carotovorum (strain PC1).